An 89-amino-acid polypeptide reads, in one-letter code: Signal recognition particle 19 kDa protein (89 aa).

Belongs to the SRP19 family. In terms of assembly, part of the signal recognition particle protein translocation system, which is composed of SRP and FtsY. Archaeal SRP consists of a 7S RNA molecule of 300 nucleotides and two protein subunits: SRP54 and SRP19.

It is found in the cytoplasm. Functionally, involved in targeting and insertion of nascent membrane proteins into the cytoplasmic membrane. Binds directly to 7S RNA and mediates binding of the 54 kDa subunit of the SRP. The chain is Signal recognition particle 19 kDa protein from Methanococcus vannielii (strain ATCC 35089 / DSM 1224 / JCM 13029 / OCM 148 / SB).